The following is an 832-amino-acid chain: Cadherin-like protein 26 (832 aa).

The first 27 residues, 1-27, serve as a signal peptide directing secretion; the sequence is MAMRSGRHPSLLLLLVLLLWLLQVSII. Over 28–614 the chain is Extracellular; the sequence is DSVQQETDDL…ELADAEVGLH (587 aa). Cadherin domains lie at 35–165, 166–275, 276–396, and 397–500; these read DDLT…APQF, PEKE…RPAF, TQEN…PPAF, and HPQS…VPTL. 4 N-linked (GlcNAc...) asparagine glycosylation sites follow: Asn81, Asn85, Asn171, and Asn177. Residue Asn462 is glycosylated (N-linked (GlcNAc...) asparagine). A helical membrane pass occupies residues 615–635; that stretch reads VGALFPVCAAFVALAVALLFL. Over 636 to 832 the chain is Cytoplasmic; that stretch reads LRCYFVLEPK…EIYSESGVPS (197 aa). The disordered stretch occupies residues 813-832; the sequence is SLGSKATPFEEIYSESGVPS.

In terms of assembly, homodimer. Component of a cadherin:catenin adhesion complex composed of at least of CDH26, beta-catenin/CTNNB1, alpha-catenin/CTNNA1 and p120 catenin/CTNND1. In terms of processing, N-glycosylated. Expressed by epithelial cells of gastrointestinal tissue.

The protein localises to the cell membrane. Cadherins are calcium-dependent cell adhesion proteins. They preferentially interact with themselves in a homophilic manner in connecting cells; cadherins may thus contribute to the sorting of heterogeneous cell types. Ligand for integrins alpha-E/beta-7, ITGAE:ITGAB7, alpha-4/beta-7, ITGA4:ITGAB7 and alpha-4/beta-1, ITGA4:ITGAB1 through which modulates CD4(+) T cells activation. The polypeptide is Cadherin-like protein 26 (CDH26) (Homo sapiens (Human)).